The chain runs to 660 residues: Solute carrier family 5 member 4B (660 aa).

At 1–27 (MASTLSPSITPQTEEPPVVPVRIQNAA) the chain is on the cytoplasmic side. The helical transmembrane segment at 28-48 (DISVIVIYFIVVLAVGLWSMV) threads the bilayer. Topologically, residues 49-54 (RSNRGT) are extracellular. The helical transmembrane segment at 55-75 (VGGFFLAGHDMAWWPMGASLF) threads the bilayer. At 76-82 (ASNIGSN) the chain is on the cytoplasmic side. A helical membrane pass occupies residues 83-103 (HFVGLAGTGAASGIAIAAVEW). Over 104-105 (NA) the chain is Extracellular. A helical membrane pass occupies residues 106–126 (LLMVLVLGWVFLPIYIKAGVL). The Cytoplasmic portion of the chain corresponds to 127–142 (TMPEYLRKRFGGKRLQ). The chain crosses the membrane as a helical span at residues 143–163 (IYLSVLSLFIMVALQTSSIIF). Over 164 to 166 (SGA) the chain is Extracellular. The chain crosses the membrane as a helical span at residues 167–187 (IFIQLALGLNLYLAVFILLAI). The Cytoplasmic segment spans residues 188-208 (TAFYTVAGGLASVIYTDSVQT). A helical membrane pass occupies residues 209 to 229 (FIMLLGSLILMGFAFAEVGGY). Topologically, residues 230–277 (ESFTEKYMNAIPSVVEGDNLTISPKCYTPQPDSFHVFRDPVTGDIPWP) are extracellular. A helical transmembrane segment spans residues 278 to 298 (GLIFGMTILAIWYWCADQVIV). Residues 299–313 (QRCLCGKNMSHVKAA) lie on the Cytoplasmic side of the membrane. A helical transmembrane segment spans residues 314–334 (CILCGYLKLLPMFLMVMPGMI). Topologically, residues 335–380 (SRILYTDKVACVVPSECEKQCGTAVGCTNYAYPTLVLELMPDGLRG) are extracellular. A helical membrane pass occupies residues 381-401 (LMLSVMLASLMSSLTSIFNSA). Residues 402-423 (STLFTIDLYTKIRKKASERELM) lie on the Cytoplasmic side of the membrane. A helical membrane pass occupies residues 424-444 (IAGRIFGMVLIAVSILWVPLV). The Extracellular segment spans residues 445 to 455 (QVSQNGQLFHY). A helical membrane pass occupies residues 456 to 476 (IGSVSSYLGPPLGAVFMLAIF). Residues 477–484 (FKRVNEQG) lie on the Cytoplasmic side of the membrane. A helical membrane pass occupies residues 485–505 (AFWGLMVGLVVGLIRLIAEFV). The Extracellular portion of the chain corresponds to 506–526 (YGTGSCVAPSNCPKIICGVHY). The chain crosses the membrane as a helical span at residues 527 to 547 (MYFAIILFFVSIIVILGVSFL). Over 548 to 639 (TEPIPDVHLY…DTSEKPLWRT (92 aa)) the chain is Cytoplasmic. The helical transmembrane segment at 640-660 (VMNINAVLLLGVAVFVHAYFA) threads the bilayer.

It belongs to the sodium:solute symporter (SSF) (TC 2.A.21) family. As to expression, expressed in small intestine. Expressed in kidney.

The protein localises to the cell membrane. The enzyme catalyses D-glucose(out) + 2 Na(+)(out) = D-glucose(in) + 2 Na(+)(in). With respect to regulation, inhibited by phlorizin. In terms of biological role, low-affinity sodium/D-glucose symporter. Generates D-glucose-induced depolarization in a pH-independent manner. The polypeptide is Solute carrier family 5 member 4B (Mus musculus (Mouse)).